Consider the following 325-residue polypeptide: Tagatose 1,6-diphosphate aldolase 1 (325 aa).

The protein belongs to the aldolase LacD family.

The enzyme catalyses D-tagatofuranose 1,6-bisphosphate = D-glyceraldehyde 3-phosphate + dihydroxyacetone phosphate. The protein operates within carbohydrate metabolism; D-tagatose 6-phosphate degradation; D-glyceraldehyde 3-phosphate and glycerone phosphate from D-tagatose 6-phosphate: step 2/2. In Streptococcus mutans serotype c (strain ATCC 700610 / UA159), this protein is Tagatose 1,6-diphosphate aldolase 1 (lacD1).